The primary structure comprises 62 residues: Large ribosomal subunit protein eL19 (62 aa).

This sequence belongs to the eukaryotic ribosomal protein eL19 family.

The chain is Large ribosomal subunit protein eL19 (RPL19) from Zea mays (Maize).